The chain runs to 317 residues: L-lactate dehydrogenase (317 aa).

NAD(+) contacts are provided by residues valine 17, aspartate 38, lysine 43, tyrosine 69, and glycine 83–alanine 84. Glutamine 86 and arginine 92 together coordinate substrate. NAD(+) is bound by residues serine 105, alanine 122 to asparagine 124, and serine 147. Asparagine 124–aspartate 127 contributes to the substrate binding site. Position 152 to 155 (aspartate 152 to arginine 155) interacts with substrate. Positions 157 and 172 each coordinate beta-D-fructose 1,6-bisphosphate. Catalysis depends on histidine 179, which acts as the Proton acceptor. Phosphotyrosine is present on tyrosine 224. Threonine 233 provides a ligand contact to substrate.

It belongs to the LDH/MDH superfamily. LDH family. As to quaternary structure, homotetramer.

It is found in the cytoplasm. The enzyme catalyses (S)-lactate + NAD(+) = pyruvate + NADH + H(+). Its pathway is fermentation; pyruvate fermentation to lactate; (S)-lactate from pyruvate: step 1/1. Allosterically activated by fructose 1,6-bisphosphate (FBP). In terms of biological role, catalyzes the conversion of lactate to pyruvate. The protein is L-lactate dehydrogenase of Bacillus caldotenax.